Reading from the N-terminus, the 277-residue chain is Putative phosphoenolpyruvate synthase regulatory protein (277 aa).

Residue 157 to 164 coordinates ADP; that stretch reads GVSRSGKT.

Belongs to the pyruvate, phosphate/water dikinase regulatory protein family. PSRP subfamily.

It carries out the reaction [pyruvate, water dikinase] + ADP = [pyruvate, water dikinase]-phosphate + AMP + H(+). The catalysed reaction is [pyruvate, water dikinase]-phosphate + phosphate + H(+) = [pyruvate, water dikinase] + diphosphate. Bifunctional serine/threonine kinase and phosphorylase involved in the regulation of the phosphoenolpyruvate synthase (PEPS) by catalyzing its phosphorylation/dephosphorylation. In Vibrio cholerae serotype O1 (strain ATCC 39541 / Classical Ogawa 395 / O395), this protein is Putative phosphoenolpyruvate synthase regulatory protein.